An 80-amino-acid chain; its full sequence is Probable Rubredoxin-1 (80 aa).

The Rubredoxin-like domain occupies 19 to 72; it reads YRKYKCKVCGWVYDPLKGDPSQNIPPKTPFEELPDTWICPVCRGKVGKESFEPL. Fe cation-binding residues include C24, C27, C57, and C60.

The protein belongs to the rubredoxin family. Requires Fe(3+) as cofactor.

Its function is as follows. Rubredoxin is a small nonheme, iron protein lacking acid-labile sulfide. Its single Fe, chelated to 4 Cys, functions as an electron acceptor and may also stabilize the conformation of the molecule. This is Probable Rubredoxin-1 from Methanocaldococcus jannaschii (strain ATCC 43067 / DSM 2661 / JAL-1 / JCM 10045 / NBRC 100440) (Methanococcus jannaschii).